Here is a 448-residue protein sequence, read N- to C-terminus: Glutamate--tRNA ligase (448 aa).

The short motif at proline 10–asparagine 20 is the 'HIGH' region element. The 'KMSKS' region signature appears at lysine 214–arginine 218. Lysine 217 contacts ATP.

It belongs to the class-I aminoacyl-tRNA synthetase family. Glutamate--tRNA ligase type 1 subfamily. In terms of assembly, monomer.

It localises to the cytoplasm. The enzyme catalyses tRNA(Glu) + L-glutamate + ATP = L-glutamyl-tRNA(Glu) + AMP + diphosphate. Its function is as follows. Catalyzes the attachment of glutamate to tRNA(Glu) in a two-step reaction: glutamate is first activated by ATP to form Glu-AMP and then transferred to the acceptor end of tRNA(Glu). The sequence is that of Glutamate--tRNA ligase from Phytoplasma australiense.